The primary structure comprises 185 residues: MDIDPYKEFGATVELLSFLPSDFFPSVRDLLDTASALYREALESPEHCSPHHTALRQAILCWVELMTLATWVGNNLQDPASRDLVVNYVNTNMGLKIRQLLWFHISCLTFGRETVLEYLVSFGVWIRTPPAYRPPNAPILSTLPETTVVRRRDRGRSPRRRTPSPRRRRSQSPRRRRSQSRESQC.

The segment at 136-185 (NAPILSTLPETTVVRRRDRGRSPRRRTPSPRRRRSQSPRRRRSQSRESQC) is disordered. The span at 149–178 (VRRRDRGRSPRRRTPSPRRRRSQSPRRRRS) shows a compositional bias: basic residues. Residues S157, S164, and S172 each carry the phosphoserine; by host modification. A 1; half-length repeat occupies 157-163 (SPRRRTP). Residues 157–179 (SPRRRTPSPRRRRSQSPRRRRSQ) are 3 X 8 AA repeats of S-P-R-R-R-[PR]-S-Q. A Bipartite nuclear localization signal motif is present at residues 160–177 (RRTPSPRRRRSQSPRRRR). 2 tandem repeats follow at residues 164-171 (SPRRRRSQ) and 172-179 (SPRRRRSQ). The segment at 179–185 (QSRESQC) is RNA binding.

It belongs to the orthohepadnavirus core antigen family. As to quaternary structure, homodimerizes, then multimerizes. Interacts with cytosol exposed regions of viral L glycoprotein present in the reticulum-to-Golgi compartment. Interacts with human FLNB. Phosphorylated form interacts with host importin alpha; this interaction depends on the exposure of the NLS, which itself depends upon genome maturation and/or phosphorylation of the capsid protein. Interacts with host NUP153. Post-translationally, phosphorylated by host SRPK1, SRPK2, and maybe protein kinase C or GAPDH. Phosphorylation is critical for pregenomic RNA packaging. Protein kinase C phosphorylation is stimulated by HBx protein and may play a role in transport of the viral genome to the nucleus at the late step during the viral replication cycle.

The protein localises to the virion. It is found in the host cytoplasm. In terms of biological role, self assembles to form an icosahedral capsid. Most capsids appear to be large particles with an icosahedral symmetry of T=4 and consist of 240 copies of capsid protein, though a fraction forms smaller T=3 particles consisting of 180 capsid proteins. Entering capsids are transported along microtubules to the nucleus. Phosphorylation of the capsid is thought to induce exposure of nuclear localization signal in the C-terminal portion of the capsid protein that allows binding to the nuclear pore complex via the importin (karyopherin-) alpha and beta. Capsids are imported in intact form through the nuclear pore into the nuclear basket, where it probably binds NUP153. Only capsids that contain the mature viral genome can release the viral DNA and capsid protein into the nucleoplasm. Immature capsids get stuck in the basket. Capsids encapsulate the pre-genomic RNA and the P protein. Pre-genomic RNA is reverse-transcribed into DNA while the capsid is still in the cytoplasm. The capsid can then either be directed to the nucleus, providing more genomes for transcription, or bud through the endoplasmic reticulum to provide new virions. This Homo sapiens (Human) protein is Capsid protein.